The primary structure comprises 337 residues: Ketol-acid reductoisomerase (NADP(+)) (337 aa).

The KARI N-terminal Rossmann domain maps to 3 to 183; that stretch reads IELLYDADAD…GGARAGVIPT (181 aa). NADP(+)-binding positions include 26 to 29, R49, S52, S54, and 84 to 87; these read YGSQ and DTSQ. Residue H109 is part of the active site. G135 serves as a coordination point for NADP(+). Positions 184–329 constitute a KARI C-terminal knotted domain; that stretch reads TFREETETDL…SKLRDLMSWV (146 aa). 4 residues coordinate Mg(2+): D192, E196, E228, and E232. Residue S253 participates in substrate binding.

The protein belongs to the ketol-acid reductoisomerase family. Requires Mg(2+) as cofactor.

It catalyses the reaction (2R)-2,3-dihydroxy-3-methylbutanoate + NADP(+) = (2S)-2-acetolactate + NADPH + H(+). It carries out the reaction (2R,3R)-2,3-dihydroxy-3-methylpentanoate + NADP(+) = (S)-2-ethyl-2-hydroxy-3-oxobutanoate + NADPH + H(+). It functions in the pathway amino-acid biosynthesis; L-isoleucine biosynthesis; L-isoleucine from 2-oxobutanoate: step 2/4. The protein operates within amino-acid biosynthesis; L-valine biosynthesis; L-valine from pyruvate: step 2/4. In terms of biological role, involved in the biosynthesis of branched-chain amino acids (BCAA). Catalyzes an alkyl-migration followed by a ketol-acid reduction of (S)-2-acetolactate (S2AL) to yield (R)-2,3-dihydroxy-isovalerate. In the isomerase reaction, S2AL is rearranged via a Mg-dependent methyl migration to produce 3-hydroxy-3-methyl-2-ketobutyrate (HMKB). In the reductase reaction, this 2-ketoacid undergoes a metal-dependent reduction by NADPH to yield (R)-2,3-dihydroxy-isovalerate. The protein is Ketol-acid reductoisomerase (NADP(+)) of Corynebacterium diphtheriae (strain ATCC 700971 / NCTC 13129 / Biotype gravis).